Here is a 184-residue protein sequence, read N- to C-terminus: MSEDKLQKLQDSGLVDWAVFSEIVTMDEDEEGFSKSLVEVFVSQVEETFEEIDKYLKEKNLEKLSSSGHFLKGSAAALGLTKISNQCERIQNYGHKINFDNFQLEDIKTKGDSAVSAENVAVNDGETNPENGSNGNETSNNKTNTSNIPDESSDDFWIALIEDALAKARDGFDQSRRALDEYYE.

One can recognise an HPt domain in the interval 30–125; sequence EEGFSKSLVE…SAENVAVNDG (96 aa). Position 69 is a phosphohistidine (H69). The tract at residues 120-152 is disordered; that stretch reads VAVNDGETNPENGSNGNETSNNKTNTSNIPDES. Residues 125-147 are compositionally biased toward low complexity; it reads GETNPENGSNGNETSNNKTNTSN.

It belongs to the YPD1 family.

It localises to the cytoplasm. It is found in the nucleus. Functionally, phosphorelay intermediate protein that is part of the bifurcated SLN1-YPD1-SKN7/SSK1 two-component regulatory system, which controls activity of the HOG1 pathway and gene expression in response to oxidative stress and probably to changes in the osmolarity of the extracellular environment. Catalyzes the phosphoryl group transfer from the membrane-bound histidine kinase SLN1 to two distinct response regulators SSK1 and SKN7. The sequence is that of Phosphorelay intermediate protein YPD1 (YPD1) from Candida albicans (strain SC5314 / ATCC MYA-2876) (Yeast).